Here is a 151-residue protein sequence, read N- to C-terminus: Macrodomain Ter protein (151 aa).

This sequence belongs to the MatP family. Homodimer.

The protein resides in the cytoplasm. Required for spatial organization of the terminus region of the chromosome (Ter macrodomain) during the cell cycle. Prevents early segregation of duplicated Ter macrodomains during cell division. Binds specifically to matS, which is a 13 bp signature motif repeated within the Ter macrodomain. This Photorhabdus laumondii subsp. laumondii (strain DSM 15139 / CIP 105565 / TT01) (Photorhabdus luminescens subsp. laumondii) protein is Macrodomain Ter protein.